Reading from the N-terminus, the 770-residue chain is Transducin-like enhancer protein 1 (770 aa).

The segment at 1 to 131 is q domain; the sequence is MFPQSRHPTP…IIGQQQLQAQ (131 aa). Disordered stretches follow at residues 128-157 and 176-348; these read LQAQ…GIPP and HLAI…PAID. Residues 132–199 are GP domain; sequence HLSHGHGPPV…HHRDREPGTS (68 aa). 2 stretches are compositionally biased toward basic and acidic residues: residues 178-196 and 209-246; these read AIKD…DREP and RGTD…KSDD. The interval 200-268 is ccN domain; sequence NSLLVPDSLR…SPRASPAHSP (69 aa). A Nuclear localization signal motif is present at residues 225–228; the sequence is KKRK. The residue at position 239 (Ser-239) is a Phosphoserine. Residues 257–266 show a composition bias toward low complexity; it reads PSSPRASPAH. Ser-259, Ser-263, and Ser-267 each carry phosphoserine; by CDK1. A compositionally biased stretch (basic and acidic residues) spans 267–283; that stretch reads SPRENGIDKNRLLKKDA. The tract at residues 269–450 is SP domain; that stretch reads RENGIDKNRL…GGKPAYSFHV (182 aa). The span at 284-298 shows a compositional bias: low complexity; the sequence is SSSPASTASSASSTS. The residue at position 286 (Ser-286) is a Phosphoserine. Positions 300-310 are enriched in basic and acidic residues; the sequence is KSKEMSLHEKA. 6 WD repeats span residues 470–501, 528–558, 572–602, 614–644, 696–726, and 737–767; these read GIPR…HVYT, NRDN…SIWD, SSAP…AVWD, GHTD…RSWD, LHES…NAWR, and KESS…TVYE.

Belongs to the WD repeat Groucho/TLE family. As to quaternary structure, homooligomer and heterooligomer with other family members. Binds RUNX1, RUNX3, FOXA2, KDM6A, UTY, histone H3, HESX1, ESRRG and the NF-kappa-B subunit RELA. Interacts with HES1 (via WRPW motif). Binds TCF7, LEF1, TCF7L1 and TCF7L2. Interacts with SIX3. Interacts with EFNB1. Interacts with TLE4. Interacts with FOXG1/BF-1; the interaction is inhibited by TLE6/GRG6. Post-translationally, phosphorylated, probably by CDK1. The degree of phosphorylation varies throughout the cell cycle, and is highest at the G2/M transition. Becomes hyperphosphorylated in response to cell differentiation and interaction with HES1 or RUNX1. In terms of processing, ubiquitinated by XIAP/BIRC4. In terms of tissue distribution, in all tissues examined, mostly in brain, liver and muscle.

It is found in the nucleus. In terms of biological role, transcriptional corepressor that binds to a number of transcription factors. Inhibits NF-kappa-B-regulated gene expression. Inhibits the transcriptional activation mediated by FOXA2, and by CTNNB1 and TCF family members in Wnt signaling. Enhances FOXG1/BF-1- and HES1-mediated transcriptional repression. The effects of full-length TLE family members may be modulated by association with dominant-negative AES. Unusual function as coactivator for ESRRG. The protein is Transducin-like enhancer protein 1 (TLE1) of Homo sapiens (Human).